We begin with the raw amino-acid sequence, 66 residues long: Conotoxin Lt5.6 (66 aa).

An N-terminal signal peptide occupies residues 1–19; that stretch reads MLCLPVFIILLLLASPAAP. The propeptide occupies 20–54; sequence KSLETRIQNDLIRAGLTDADLKTEKGFLSGLLNVA.

The protein belongs to the conotoxin T superfamily. Post-translationally, contains 2 disulfide bonds that can be either 'C1-C3, C2-C4' or 'C1-C4, C2-C3', since these disulfide connectivities have been observed for conotoxins with cysteine framework V (for examples, see AC P0DQQ7 and AC P81755). Expressed by the venom duct.

The protein resides in the secreted. In Conus litteratus (Lettered cone), this protein is Conotoxin Lt5.6.